Reading from the N-terminus, the 1519-residue chain is Dicer-like protein 1 (1519 aa).

The segment covering 1–13 (MTHQNTETASLAT) has biased composition (polar residues). Residues 1–62 (MTHQNTETAS…KDPSQRQRQQ (62 aa)) are disordered. Positions 39 to 48 (SDESEGSEEE) are enriched in acidic residues. Positions 116–297 (LFERAKVQNT…EAARNLEALL (182 aa)) constitute a Helicase ATP-binding domain. 129–136 (LDTGSGKT) lines the ATP pocket. A DEAH box motif is present at residues 242-245 (DEAH). The 171-residue stretch at 431–601 (ALSSKVRVLW…QLLPEDRILH (171 aa)) folds into the Helicase C-terminal domain. The Dicer dsRNA-binding fold domain occupies 634-724 (AITVLARYAS…NSVYHRRLPA (91 aa)). Residues 882 to 1001 (DDIEYQADMP…ICIEPLKISA (120 aa)) form the PAZ domain. RNase III domains lie at 1026–1184 (GLEA…LTPG) and 1235–1387 (CRRV…VDSN). The Mg(2+) site is built by Glu-1275, Asp-1373, and Glu-1376. The region spanning 1421-1489 (TFLHNKLTNE…SENALTELLH (69 aa)) is the DRBM domain. Positions 1433, 1460, 1501, and 1503 each coordinate Zn(2+).

This sequence belongs to the helicase family. Dicer subfamily. Mg(2+) serves as cofactor. The cofactor is Mn(2+).

Functionally, dicer-like endonuclease involved in cleaving double-stranded RNA in the RNA interference (RNAi) pathway. Produces 21 to 25 bp dsRNAs (siRNAs) which target the selective destruction of homologous RNAs leading to sequence-specific suppression of gene expression, called post-transcriptional gene silencing (PTGS). Part of a broad host defense response against viral infection and transposons. In Aspergillus terreus (strain NIH 2624 / FGSC A1156), this protein is Dicer-like protein 1 (dcl1).